A 475-amino-acid polypeptide reads, in one-letter code: Dihydrolipoyl dehydrogenase (475 aa).

FAD is bound by residues 39 to 47, lysine 56, and alanine 118; that span reads EKDAYGGTC. A disulfide bridge connects residues cysteine 47 and cysteine 52. NAD(+) contacts are provided by residues 186–190, glutamate 209, and 275–278; these read GGGYI and AVGR. Residues aspartate 318 and alanine 327 each contribute to the FAD site. Residue histidine 451 is the Proton acceptor of the active site.

The protein belongs to the class-I pyridine nucleotide-disulfide oxidoreductase family. In terms of assembly, homodimer. It depends on FAD as a cofactor.

The protein resides in the cytoplasm. The catalysed reaction is N(6)-[(R)-dihydrolipoyl]-L-lysyl-[protein] + NAD(+) = N(6)-[(R)-lipoyl]-L-lysyl-[protein] + NADH + H(+). The protein is Dihydrolipoyl dehydrogenase (lpdA) of Haloferax volcanii (strain ATCC 29605 / DSM 3757 / JCM 8879 / NBRC 14742 / NCIMB 2012 / VKM B-1768 / DS2) (Halobacterium volcanii).